The chain runs to 395 residues: ATP phosphoribosyltransferase regulatory subunit (395 aa).

This sequence belongs to the class-II aminoacyl-tRNA synthetase family. HisZ subfamily. As to quaternary structure, heteromultimer composed of HisG and HisZ subunits.

It localises to the cytoplasm. Its pathway is amino-acid biosynthesis; L-histidine biosynthesis; L-histidine from 5-phospho-alpha-D-ribose 1-diphosphate: step 1/9. In terms of biological role, required for the first step of histidine biosynthesis. May allow the feedback regulation of ATP phosphoribosyltransferase activity by histidine. This chain is ATP phosphoribosyltransferase regulatory subunit, found in Pseudomonas entomophila (strain L48).